The primary structure comprises 482 residues: Beta-1,3-glucan-binding protein 2 (482 aa).

An N-terminal signal peptide occupies residues 1–18; it reads MWIKSVCLFATIAGCLGQ. Residues 23-122 form the CBM39 domain; it reads YKVPDAKLEA…GEWTVTEFVN (100 aa). N124 carries N-linked (GlcNAc...) asparagine glycosylation. The disordered stretch occupies residues 127-153; that stretch reads VVDTSTAPPPVAPAVSEEDQSPGPQWR. The 355-residue stretch at 128-482 folds into the GH16 domain; that stretch reads VDTSTAPPPV…KVDYVRVYAL (355 aa). N-linked (GlcNAc...) asparagine glycosylation occurs at N189.

In terms of assembly, monomer. Post-translationally, N-glycosylated. Cuticle and fat body.

The protein resides in the secreted. In terms of biological role, involved in the recognition of invading microorganisms. Binds specifically to beta-1,3-glucan and lipoteichoic acid and causes aggregation of invading microorganisms. Binding to beta-1,3-glucan activates the phenoloxidase cascade. The polypeptide is Beta-1,3-glucan-binding protein 2 (Manduca sexta (Tobacco hawkmoth)).